Reading from the N-terminus, the 382-residue chain is Galactokinase (382 aa).

A substrate-binding site is contributed by 34–37; sequence EHTD. 124–130 serves as a coordination point for ATP; that stretch reads GAGLSSS. Positions 130 and 162 each coordinate Mg(2+). Residue D174 is the Proton acceptor of the active site. A substrate-binding site is contributed by Y223.

The protein belongs to the GHMP kinase family. GalK subfamily.

The protein resides in the cytoplasm. It carries out the reaction alpha-D-galactose + ATP = alpha-D-galactose 1-phosphate + ADP + H(+). Its pathway is carbohydrate metabolism; galactose metabolism. Its function is as follows. Catalyzes the transfer of the gamma-phosphate of ATP to D-galactose to form alpha-D-galactose-1-phosphate (Gal-1-P). The chain is Galactokinase from Escherichia coli O1:K1 / APEC.